A 103-amino-acid polypeptide reads, in one-letter code: Flagellar hook-basal body complex protein FliE (103 aa).

The protein belongs to the FliE family.

It is found in the bacterial flagellum basal body. This Cronobacter sakazakii (strain ATCC BAA-894) (Enterobacter sakazakii) protein is Flagellar hook-basal body complex protein FliE.